The primary structure comprises 408 residues: Metacaspase-1B (408 aa).

The segment at 1–98 (MYHRHSAPPP…PPLEAQQFGN (98 aa)) is disordered. Composition is skewed to pro residues over residues 24–49 (WPPP…FPPP) and 56–66 (SPYPTPPPHSP). Catalysis depends on residues His-199 and Cys-255.

Belongs to the peptidase C14B family.

Its function is as follows. Involved in cell death (apoptosis). Required for the apoptotic-like loss of membrane phospholipid asymmetry at stationary phase and facilitates growth under conditions of endoplasmic reticulum stress. This is Metacaspase-1B (casB) from Aspergillus fumigatus (strain CBS 144.89 / FGSC A1163 / CEA10) (Neosartorya fumigata).